Here is a 1063-residue protein sequence, read N- to C-terminus: Mediator of RNA polymerase II transcription subunit 15 (1063 aa).

Low complexity predominate over residues 149–175; it reads LQQSQIQQQRQQQQQQSQQPQQTQQPQ. Disordered stretches follow at residues 149 to 194, 286 to 342, 422 to 482, 500 to 544, and 728 to 789; these read LQQS…SGSV, QQQQ…NATN, SQNA…QPIN, NKAR…AFTK, and TASI…SVGN. Composition is skewed to polar residues over residues 176 to 192 and 301 to 310; these read ASSP…QRSG and PQGNVGAQSL. Low complexity predominate over residues 311–342; that stretch reads QSMSPQDQPSTQQQQPQRTAAPPNNPNVNATN. Polar residues predominate over residues 422–442; that stretch reads SQNAPNTNKLGNPQPDNTGNP. Positions 443–460 are enriched in low complexity; it reads QAFSQQAFAQQQQQQQQQ. Polar residues-rich tracts occupy residues 461–482 and 500–527; these read LHRT…QPIN and NKAR…PNLD. Low complexity-rich tracts occupy residues 528–542 and 733–758; these read TSST…PSAF and QQQQ…SVSS. A compositionally biased stretch (polar residues) spans 766–776; sequence SIPNAQPSVPG. Serine 948 bears the Phosphoserine mark.

Belongs to the Mediator complex subunit 15 family. Component of the Mediator complex. Component of a med15-hrp1 subcomplex, which flexibly associates with the other Mediator components.

Its subcellular location is the nucleus. Component of the Mediator complex, a coactivator involved in the regulated transcription of nearly all RNA polymerase II-dependent genes. Mediator functions as a bridge to convey information from gene-specific regulatory proteins to the basal RNA polymerase II transcription machinery. Mediator is recruited to promoters by direct interactions with regulatory proteins and serves as a scaffold for the assembly of a functional preinitiation complex with RNA polymerase II and the general transcription factors. Component of a med15-hrp1 subcomplex, linking the Mediator complex to the chromatin-remodeling activity of hrp1 at a distinct subset of hrp1-bound gene promoters. The sequence is that of Mediator of RNA polymerase II transcription subunit 15 (med15) from Schizosaccharomyces pombe (strain 972 / ATCC 24843) (Fission yeast).